The following is a 785-amino-acid chain: ATP-dependent 6-phosphofructokinase 1 (785 aa).

The N-terminal catalytic PFK domain 1 stretch occupies residues M1–T389. Residues G23, R86–S87, and G116–S119 each bind ATP. Mg(2+) is bound at residue D117. Substrate contacts are provided by residues S162–D164, R199, M206–R208, E263, R291, and H297–R300. D164 serves as the catalytic Proton acceptor. An interdomain linker region spans residues P390–M403. Residues R404–C785 are C-terminal regulatory PFK domain 2. Residues R480, T537–N541, R575, Q582–G584, E642, R668, H674–Q677, and R749 contribute to the beta-D-fructose 2,6-bisphosphate site.

This sequence belongs to the phosphofructokinase type A (PFKA) family. ATP-dependent PFK group I subfamily. Eukaryotic two domain clade 'E' sub-subfamily. Homotetramer. Mg(2+) is required as a cofactor.

It is found in the cytoplasm. It catalyses the reaction beta-D-fructose 6-phosphate + ATP = beta-D-fructose 1,6-bisphosphate + ADP + H(+). It functions in the pathway carbohydrate degradation; glycolysis; D-glyceraldehyde 3-phosphate and glycerone phosphate from D-glucose: step 3/4. Allosterically activated by ADP, AMP, or fructose 2,6-bisphosphate, and allosterically inhibited by ATP or citrate. Functionally, catalyzes the phosphorylation of D-fructose 6-phosphate to fructose 1,6-bisphosphate by ATP, the first committing step of glycolysis. This chain is ATP-dependent 6-phosphofructokinase 1 (pfkA), found in Aspergillus oryzae (strain ATCC 42149 / RIB 40) (Yellow koji mold).